The sequence spans 494 residues: ATP synthase subunit alpha, chloroplastic (494 aa).

An ATP-binding site is contributed by 170–177 (GDRQTGKT).

The protein belongs to the ATPase alpha/beta chains family. In terms of assembly, F-type ATPases have 2 components, CF(1) - the catalytic core - and CF(0) - the membrane proton channel. CF(1) has five subunits: alpha(3), beta(3), gamma(1), delta(1), epsilon(1). CF(0) has four main subunits: a, b, b' and c.

It localises to the plastid. It is found in the chloroplast thylakoid membrane. The enzyme catalyses ATP + H2O + 4 H(+)(in) = ADP + phosphate + 5 H(+)(out). Produces ATP from ADP in the presence of a proton gradient across the membrane. The alpha chain is a regulatory subunit. This Pinus thunbergii (Japanese black pine) protein is ATP synthase subunit alpha, chloroplastic.